A 397-amino-acid chain; its full sequence is CCA-adding enzyme (397 aa).

ATP-binding residues include Gly27 and Arg30. CTP contacts are provided by Gly27 and Arg30. The Mg(2+) site is built by Asp40 and Asp42. ATP is bound by residues Arg111, Asp154, Arg157, Arg160, and Arg163. Residues Arg111, Asp154, Arg157, Arg160, and Arg163 each coordinate CTP.

This sequence belongs to the tRNA nucleotidyltransferase/poly(A) polymerase family. Bacterial CCA-adding enzyme type 3 subfamily. As to quaternary structure, homodimer. Requires Mg(2+) as cofactor.

It carries out the reaction a tRNA precursor + 2 CTP + ATP = a tRNA with a 3' CCA end + 3 diphosphate. The catalysed reaction is a tRNA with a 3' CCA end + 2 CTP + ATP = a tRNA with a 3' CCACCA end + 3 diphosphate. Catalyzes the addition and repair of the essential 3'-terminal CCA sequence in tRNAs without using a nucleic acid template. Adds these three nucleotides in the order of C, C, and A to the tRNA nucleotide-73, using CTP and ATP as substrates and producing inorganic pyrophosphate. Has no poly(A) polymerase activity. The protein is CCA-adding enzyme of Bacillus subtilis (strain 168).